Here is a 139-residue protein sequence, read N- to C-terminus: Probable DNA-binding protein (139 aa).

The segment at 97–139 (DEPSREASPDLGAAGAELEDESAQAGAVQGPETLRSQVLRART) is disordered.

This Homo sapiens (Human) protein is Probable DNA-binding protein.